A 55-amino-acid chain; its full sequence is Large ribosomal subunit protein bL33 (55 aa).

It belongs to the bacterial ribosomal protein bL33 family.

This is Large ribosomal subunit protein bL33 from Rhodopseudomonas palustris (strain BisB5).